The chain runs to 224 residues: Proteasome subunit beta (224 aa).

A propeptide spans 1–6 (removed in mature form; by autocatalysis); it reads MDVMKG. Thr7 acts as the Nucleophile in catalysis.

This sequence belongs to the peptidase T1B family. As to quaternary structure, the 20S proteasome core is composed of 14 alpha and 14 beta subunits that assemble into four stacked heptameric rings, resulting in a barrel-shaped structure. The two inner rings, each composed of seven catalytic beta subunits, are sandwiched by two outer rings, each composed of seven alpha subunits. The catalytic chamber with the active sites is on the inside of the barrel. Has a gated structure, the ends of the cylinder being occluded by the N-termini of the alpha-subunits. Is capped at one or both ends by the proteasome regulatory ATPase, PAN.

Its subcellular location is the cytoplasm. The catalysed reaction is Cleavage of peptide bonds with very broad specificity.. The formation of the proteasomal ATPase PAN-20S proteasome complex, via the docking of the C-termini of PAN into the intersubunit pockets in the alpha-rings, triggers opening of the gate for substrate entry. Interconversion between the open-gate and close-gate conformations leads to a dynamic regulation of the 20S proteasome proteolysis activity. Functionally, component of the proteasome core, a large protease complex with broad specificity involved in protein degradation. In Methanocaldococcus sp. (strain FS406-22), this protein is Proteasome subunit beta.